Reading from the N-terminus, the 172-residue chain is Stellate protein CG33237 (172 aa).

It belongs to the casein kinase 2 subunit beta family. In terms of assembly, interacts in vitro with the casein kinase 2 alpha subunit (CkII-alpha). The relevance of such interaction is however unclear in vivo. Probably not expressed in wild-type flies. In males lacking the Y chromosome, it is testis-specific and constitutes the main component of star-shaped crystals.

Its function is as follows. Unknown. In males lacking the Y chromosome, its strong overexpression leads to the appearance of proteinaceous star-shaped crystals in the primary spermatocytes causing meiotic drive, possibly by interfering with normal casein kinase 2 activity. This is Stellate protein CG33237 (Ste:CG33237) from Drosophila melanogaster (Fruit fly).